Reading from the N-terminus, the 478-residue chain is Flotillin-like protein 1 (478 aa).

A lipid anchor (S-palmitoyl cysteine) is attached at Cys35. A coiled-coil region spans residues 235–277 (ENQREAEVAEANSELAKKKAAWTMAAQVAELEAAKAVALREAE).

Belongs to the band 7/mec-2 family. Flotillin subfamily. May be palmitoylated. In terms of tissue distribution, expressed in all plant organs. Primarily expressed in vascular tissues. No change in spatial expression in root upon inoculation. Expression limited to the nodule vascular tissue.

It localises to the cell membrane. The protein resides in the membrane. The protein localises to the caveola. In terms of biological role, may act as a scaffolding protein within caveolar membranes, functionally participating in formation of caveolae or caveolae-like vesicles. May be involved in nodule formation. This is Flotillin-like protein 1 (FLOT1) from Medicago truncatula (Barrel medic).